A 116-amino-acid polypeptide reads, in one-letter code: Tyrosine-protein phosphatase 20 (116 aa).

The region spanning 1–116 (WMMIVEQKCR…EIGGDAPMVV (116 aa)) is the Tyrosine-protein phosphatase domain. Position 84 (Asp84) interacts with substrate.

This sequence belongs to the protein-tyrosine phosphatase family.

It carries out the reaction O-phospho-L-tyrosyl-[protein] + H2O = L-tyrosyl-[protein] + phosphate. The chain is Tyrosine-protein phosphatase 20 (STY-20) from Styela plicata (Wrinkled sea squirt).